The sequence spans 76 residues: Acyl carrier protein (76 aa).

The region spanning 1-76 (MSIEERVKKI…SAIDYVQNNQ (76 aa)) is the Carrier domain. At Ser-36 the chain carries O-(pantetheine 4'-phosphoryl)serine.

Belongs to the acyl carrier protein (ACP) family. 4'-phosphopantetheine is transferred from CoA to a specific serine of apo-ACP by AcpS. This modification is essential for activity because fatty acids are bound in thioester linkage to the sulfhydryl of the prosthetic group.

The protein localises to the cytoplasm. It functions in the pathway lipid metabolism; fatty acid biosynthesis. Its function is as follows. Carrier of the growing fatty acid chain in fatty acid biosynthesis. In Histophilus somni (strain 129Pt) (Haemophilus somnus), this protein is Acyl carrier protein.